A 163-amino-acid polypeptide reads, in one-letter code: Protein VASCULATURE COMPLEXITY AND CONNECTIVITY (163 aa).

The first 27 residues, 1 to 27 (MTKIGGILVCLVIVGLDVAAAILGIQA), serve as a signal peptide directing secretion. 3 helical membrane passes run 54–74 (LGLGAAAILVMAHVLLNLVGG), 95–115 (MACLVLTWIVFAVGFGSIVIG), and 133–153 (FLSIGGILCFLHALFCVAYYV).

Belongs to the DESIGUAL family. Interacts with OPS. As to expression, expressed in vascular cells, mostly in hypocotyls, and, to a lower extent, in seedlings, roots, flowers, siliques, developing leaves and inflorescences, but barely in mature leaves and seeds. High levels in leaf primordia.

It is found in the endoplasmic reticulum membrane. In terms of biological role, required, together with OPS, for embryo provasculature development and cotyledon vascular complexity and connectivity. Necessary, partially redundantly with DEAL2 and DEAL3, to ensure bilateral symmetry development and early leaf margin patterning, probably via the regulation of auxin and CUC2 distribution. Regulates cell proliferation but not cell expansion. The chain is Protein VASCULATURE COMPLEXITY AND CONNECTIVITY from Arabidopsis thaliana (Mouse-ear cress).